A 131-amino-acid polypeptide reads, in one-letter code: Small ribosomal subunit protein uS8 (131 aa).

Belongs to the universal ribosomal protein uS8 family. Part of the 30S ribosomal subunit. Contacts proteins S5 and S12.

One of the primary rRNA binding proteins, it binds directly to 16S rRNA central domain where it helps coordinate assembly of the platform of the 30S subunit. The polypeptide is Small ribosomal subunit protein uS8 (Albidiferax ferrireducens (strain ATCC BAA-621 / DSM 15236 / T118) (Rhodoferax ferrireducens)).